Reading from the N-terminus, the 164-residue chain is Reticulon-like protein B22 (164 aa).

In terms of domain architecture, Reticulon spans 1 to 164 (MGEMGKAMGL…ILEQEAHSDT (164 aa)). 2 helical membrane passes run 30–50 (SLFS…GLLF) and 117–137 (LISG…SMLC).

The protein resides in the endoplasmic reticulum membrane. The sequence is that of Reticulon-like protein B22 (RTNLB22) from Arabidopsis thaliana (Mouse-ear cress).